A 92-amino-acid polypeptide reads, in one-letter code: Small ribosomal subunit protein uS19c (92 aa).

Residues 73–92 (EFSPTRTYRGHAKKDKKAKR) form a disordered region. The span at 80 to 92 (YRGHAKKDKKAKR) shows a compositional bias: basic residues.

The protein belongs to the universal ribosomal protein uS19 family.

The protein resides in the plastid. It is found in the chloroplast. Protein S19 forms a complex with S13 that binds strongly to the 16S ribosomal RNA. This Chlamydomonas reinhardtii (Chlamydomonas smithii) protein is Small ribosomal subunit protein uS19c (rps19).